Here is a 91-residue protein sequence, read N- to C-terminus: Elongation factor 1-beta (91 aa).

This sequence belongs to the EF-1-beta/EF-1-delta family.

Functionally, promotes the exchange of GDP for GTP in EF-1-alpha/GDP, thus allowing the regeneration of EF-1-alpha/GTP that could then be used to form the ternary complex EF-1-alpha/GTP/AAtRNA. In Thermococcus gammatolerans (strain DSM 15229 / JCM 11827 / EJ3), this protein is Elongation factor 1-beta.